The sequence spans 33 residues: Tail virion protein G9P (33 aa).

The chain crosses the membrane as a helical span at residues 5–25 (VGSFLGAYFLGFALFYGIGFF).

The protein belongs to the inovirus G9P protein family.

It localises to the virion. The protein resides in the host membrane. Its function is as follows. May initiate with G7P the virion concomitant assembly-budding process, by interacting with the packaging signal of the viral genome. The assembly-budding takes place at the host inner membrane. In turn, G7P and G9P are present at the end of the filamentous virion that emerges first from the bacterial host. This chain is Tail virion protein G9P (IX), found in Salmonella phage IKe (Bacteriophage IKe).